Here is a 161-residue protein sequence, read N- to C-terminus: NAD(P)H-quinone oxidoreductase subunit I, chloroplastic (161 aa).

4Fe-4S ferredoxin-type domains are found at residues 55 to 84 (GRIH…VDWK) and 95 to 124 (LNYS…MTEE). [4Fe-4S] cluster is bound by residues Cys64, Cys67, Cys70, Cys74, Cys104, Cys107, Cys110, and Cys114.

The protein belongs to the complex I 23 kDa subunit family. NDH is composed of at least 16 different subunits, 5 of which are encoded in the nucleus. [4Fe-4S] cluster serves as cofactor.

Its subcellular location is the plastid. The protein localises to the chloroplast thylakoid membrane. It carries out the reaction a plastoquinone + NADH + (n+1) H(+)(in) = a plastoquinol + NAD(+) + n H(+)(out). It catalyses the reaction a plastoquinone + NADPH + (n+1) H(+)(in) = a plastoquinol + NADP(+) + n H(+)(out). NDH shuttles electrons from NAD(P)H:plastoquinone, via FMN and iron-sulfur (Fe-S) centers, to quinones in the photosynthetic chain and possibly in a chloroplast respiratory chain. The immediate electron acceptor for the enzyme in this species is believed to be plastoquinone. Couples the redox reaction to proton translocation, and thus conserves the redox energy in a proton gradient. This is NAD(P)H-quinone oxidoreductase subunit I, chloroplastic from Phaseolus vulgaris (Kidney bean).